The sequence spans 566 residues: Phosphatidylinositol 3,4,5-trisphosphate 3-phosphatase TPTE2 (566 aa).

The next 4 helical transmembrane spans lie at 135-155, 173-193, 208-228, and 234-254; these read SFAFGIFGVFLVLLDVTLLLA, ISLAIALFFLMDVLLRVFVEG, AIIVTPLLVDVVYIFFDIKFL, and WIHLVRLLRLIILIRIFHLIH. The Phosphatase tensin-type domain maps to 272-448; that stretch reads RRYTRDGFDL…GYFAQVKHLY (177 aa). The active-site Phosphocysteine intermediate is C382. In terms of domain architecture, C2 tensin-type spans 455–566; it reads RRILFIKRFI…ILHSFRLVFT (112 aa).

It is found in the endoplasmic reticulum membrane. Its subcellular location is the golgi apparatus membrane. The catalysed reaction is a 1,2-diacyl-sn-glycero-3-phospho-(1D-myo-inositol-3,4,5-trisphosphate) + H2O = a 1,2-diacyl-sn-glycero-3-phospho-(1D-myo-inositol-4,5-bisphosphate) + phosphate. Acts as a lipid phosphatase, removing the phosphate in the D3 position of the inositol ring from phosphatidylinositol 3,4,5-trisphosphate. The protein is Phosphatidylinositol 3,4,5-trisphosphate 3-phosphatase TPTE2 (TPTE2) of Macaca fascicularis (Crab-eating macaque).